A 248-amino-acid chain; its full sequence is Segregation and condensation protein A (248 aa).

The protein belongs to the ScpA family. In terms of assembly, component of a cohesin-like complex composed of ScpA, ScpB and the Smc homodimer, in which ScpA and ScpB bind to the head domain of Smc. The presence of the three proteins is required for the association of the complex with DNA.

It localises to the cytoplasm. Participates in chromosomal partition during cell division. May act via the formation of a condensin-like complex containing Smc and ScpB that pull DNA away from mid-cell into both cell halves. This Bacillus cytotoxicus (strain DSM 22905 / CIP 110041 / 391-98 / NVH 391-98) protein is Segregation and condensation protein A.